The following is a 536-amino-acid chain: Xylulose kinase (536 aa).

H99, R170, D280, and N281 together coordinate substrate. Residues W355, 441 to 442 (GA), and N445 each bind ATP.

Belongs to the FGGY kinase family. Monomer.

The catalysed reaction is D-xylulose + ATP = D-xylulose 5-phosphate + ADP + H(+). Phosphorylates D-xylulose to produce D-xylulose 5-phosphate, a molecule that may play an important role in the regulation of glucose metabolism and lipogenesis. The chain is Xylulose kinase (Xylb) from Rattus norvegicus (Rat).